The primary structure comprises 382 residues: Lipid-A-disaccharide synthase (382 aa).

It belongs to the LpxB family.

The enzyme catalyses 2-N,3-O-bis[(3R)-3-hydroxytetradecanoyl]-alpha-D-glucosaminyl 1-phosphate + UDP-2-N,3-O-bis[(3R)-3-hydroxytetradecanoyl]-alpha-D-glucosamine = lipid A disaccharide (E. coli) + UDP + H(+). The catalysed reaction is a lipid X + a UDP-2-N,3-O-bis[(3R)-3-hydroxyacyl]-alpha-D-glucosamine = a lipid A disaccharide + UDP + H(+). The protein operates within glycolipid biosynthesis; lipid IV(A) biosynthesis; lipid IV(A) from (3R)-3-hydroxytetradecanoyl-[acyl-carrier-protein] and UDP-N-acetyl-alpha-D-glucosamine: step 5/6. Condensation of UDP-2,3-diacylglucosamine and 2,3-diacylglucosamine-1-phosphate to form lipid A disaccharide, a precursor of lipid A, a phosphorylated glycolipid that anchors the lipopolysaccharide to the outer membrane of the cell. This chain is Lipid-A-disaccharide synthase, found in Citrobacter koseri (strain ATCC BAA-895 / CDC 4225-83 / SGSC4696).